We begin with the raw amino-acid sequence, 556 residues long: Arginine--tRNA ligase (556 aa).

The short motif at 130 to 140 (ANPTGPIHLGG) is the 'HIGH' region element.

This sequence belongs to the class-I aminoacyl-tRNA synthetase family. As to quaternary structure, monomer.

It is found in the cytoplasm. The enzyme catalyses tRNA(Arg) + L-arginine + ATP = L-arginyl-tRNA(Arg) + AMP + diphosphate. This is Arginine--tRNA ligase from Corynebacterium jeikeium (strain K411).